The primary structure comprises 438 residues: Glutamyl-tRNA reductase (438 aa).

Substrate-binding positions include 49–52, Ser-109, 114–116, and Gln-120; these read TCNR and EGQ. The active-site Nucleophile is Cys-50. 198 to 203 lines the NADP(+) pocket; sequence GAGRMS.

This sequence belongs to the glutamyl-tRNA reductase family. Homodimer.

The enzyme catalyses (S)-4-amino-5-oxopentanoate + tRNA(Glu) + NADP(+) = L-glutamyl-tRNA(Glu) + NADPH + H(+). Its pathway is porphyrin-containing compound metabolism; protoporphyrin-IX biosynthesis; 5-aminolevulinate from L-glutamyl-tRNA(Glu): step 1/2. The protein operates within porphyrin-containing compound metabolism; chlorophyll biosynthesis. In terms of biological role, catalyzes the NADPH-dependent reduction of glutamyl-tRNA(Glu) to glutamate 1-semialdehyde (GSA). The chain is Glutamyl-tRNA reductase from Synechococcus sp. (strain WH7803).